A 465-amino-acid chain; its full sequence is Tetratricopeptide repeat protein 38 (465 aa).

TPR repeat units follow at residues 104–137 (REQL…HPTD), 176–209 (SYVK…EPTD), and 248–281 (CHNY…SLQA).

This sequence belongs to the TTC38 family.

The protein is Tetratricopeptide repeat protein 38 (Ttc38) of Mus musculus (Mouse).